The sequence spans 68 residues: Protein SlyX homolog (68 aa).

The protein belongs to the SlyX family.

The protein is Protein SlyX homolog of Pseudomonas fluorescens (strain ATCC BAA-477 / NRRL B-23932 / Pf-5).